The chain runs to 347 residues: NADH-ubiquinone oxidoreductase chain 2 (347 aa).

10 helical membrane passes run 13–33, 55–75, 96–116, 123–143, 150–170, 178–198, 201–221, 247–267, 277–297, and 325–345; these read IFAG…WVGL, AAIK…MAIL, LMIV…FWVP, PLMS…SIMY, NVSL…WGGL, ILAY…PYNP, TILN…LLNL, TLLS…WLII, ITPT…LRLI, and FLPT…FMLM.

Belongs to the complex I subunit 2 family. In terms of assembly, core subunit of respiratory chain NADH dehydrogenase (Complex I) which is composed of 45 different subunits. Interacts with TMEM242.

It localises to the mitochondrion inner membrane. It carries out the reaction a ubiquinone + NADH + 5 H(+)(in) = a ubiquinol + NAD(+) + 4 H(+)(out). In terms of biological role, core subunit of the mitochondrial membrane respiratory chain NADH dehydrogenase (Complex I) which catalyzes electron transfer from NADH through the respiratory chain, using ubiquinone as an electron acceptor. Essential for the catalytic activity and assembly of complex I. This is NADH-ubiquinone oxidoreductase chain 2 from Gorilla gorilla gorilla (Western lowland gorilla).